Reading from the N-terminus, the 45-residue chain is Ribosome-inactivating protein TAP-29 (45 aa).

The protein belongs to the ribosome-inactivating protein family. Type 1 RIP subfamily.

The catalysed reaction is Endohydrolysis of the N-glycosidic bond at one specific adenosine on the 28S rRNA.. In terms of biological role, capable of inhibiting HIV-1 infection and replication. It inactivates eukaryotic 60S ribosomal subunits. In Trichosanthes kirilowii (Chinese snake gourd), this protein is Ribosome-inactivating protein TAP-29.